Consider the following 853-residue polypeptide: Probable inorganic carbon transporter subunit DabA (853 aa).

The disordered stretch occupies residues 1–21 (MSHANSEETMMNTAVAHPSTS). Polar residues predominate over residues 7 to 21 (EETMMNTAVAHPSTS). Positions 364, 366, 546, and 561 each coordinate Zn(2+).

The protein belongs to the inorganic carbon transporter (TC 9.A.2) DabA family. As to quaternary structure, forms a complex with DabB. Requires Zn(2+) as cofactor.

The protein localises to the cell inner membrane. Part of an energy-coupled inorganic carbon pump. This chain is Probable inorganic carbon transporter subunit DabA, found in Methylovorus glucosotrophus (strain SIP3-4).